The primary structure comprises 442 residues: tRNA(Ile)-lysidine synthase (442 aa).

Residue 27–32 participates in ATP binding; sequence SGGLDS.

This sequence belongs to the tRNA(Ile)-lysidine synthase family.

The protein resides in the cytoplasm. It catalyses the reaction cytidine(34) in tRNA(Ile2) + L-lysine + ATP = lysidine(34) in tRNA(Ile2) + AMP + diphosphate + H(+). Functionally, ligates lysine onto the cytidine present at position 34 of the AUA codon-specific tRNA(Ile) that contains the anticodon CAU, in an ATP-dependent manner. Cytidine is converted to lysidine, thus changing the amino acid specificity of the tRNA from methionine to isoleucine. The chain is tRNA(Ile)-lysidine synthase from Photorhabdus laumondii subsp. laumondii (strain DSM 15139 / CIP 105565 / TT01) (Photorhabdus luminescens subsp. laumondii).